The chain runs to 585 residues: MAGUK p55 subfamily member 3 (585 aa).

2 consecutive L27 domains span residues 6-60 (EDSG…ERQS) and 61-118 (PTPV…FDPV). The 82-residue stretch at 137 to 218 (IVRLVKNKEP…SITLKIIPAT (82 aa)) folds into the PDZ domain. Positions 226–296 (ESKVFMRALF…PSKQFQERRL (71 aa)) constitute an SH3 domain. Ser307 is subject to Phosphoserine. The Guanylate kinase-like domain occupies 385 to 570 (SRLVVLIGSL…VCSQLRAVIE (186 aa)). Positions 510-530 (KRKTPPVSPDSEDPATPLDEQ) are disordered.

Belongs to the MAGUK family. As to quaternary structure, interacts with HTR2C; this interaction stabilizes the receptor at the plasma membrane and prevents the desensitization of the HTR2C receptor-mediated calcium response. Interacts with HTR2A. Interacts with HTR4. Interacts (via PDZ domain) with CADM1 (via C-terminus)Interacts (via PDZ domain) with CADM1; this interaction connects CADM1 with DLG1. Interacts (via Guanylate kinase-like domain) with PALS1. Interacts with DLG1 (via N-terminus); this interaction connects CADM1 with DLG1 and links CADM1 with the regulatory subunit of phosphoinositide-3-kinase (PI3K) by forming a multiprotein complex and participates in cell spreading.

The protein resides in the apical cell membrane. It localises to the cell membrane. The protein localises to the cell junction. Its subcellular location is the adherens junction. Participates in cell spreading through the phosphoinositide-3-kinase (PI3K) pathway by connecting CADM1 to DLG1 and the regulatory subunit of phosphoinositide-3-kinase (PI3K). Stabilizes HTR2C at the plasma membrane and prevents its desensitization. May participates in the maintenance of adherens junctions. In Rattus norvegicus (Rat), this protein is MAGUK p55 subfamily member 3.